Reading from the N-terminus, the 127-residue chain is MLIEPTDVASYSVYDRVKNRPEELLAQDIIEAEAEAALITGHRFEDSLYDPLPGKVKLALVKLAQYFALVNSDESASSSYQYEKMGDYSYTVSGEGRIQRPEVYHLLEEFIKPGYVPESSRLKVRSL.

This is an uncharacterized protein from Bacillus subtilis (strain 168).